The primary structure comprises 662 residues: PAN2-PAN3 deadenylation complex subunit PAN3 (662 aa).

2 disordered regions span residues 1–26 and 59–131; these read MASA…AREN and TTYQ…RAET. The C3H1-type zinc-finger motif lies at 26-55; the sequence is NAKDTLCRNVTIYGRCRYEDKGCAFNHDPH. A compositionally biased stretch (polar residues) spans 72 to 85; sequence DSPSFTPSLLSSNG. Positions 86-102 are enriched in low complexity; sequence SSPTTASVTAKKAATIS. Residues 114 to 126 are compositionally biased toward polar residues; it reads RNITSRSNTSTPS. Residues 265 to 525 are pseudokinase domain; that stretch reads QTLPNTQLPA…NIDIFITGIS (261 aa). Residues R317, 366 to 373, and 425 to 426 contribute to the ATP site; these read DYHPLSKT and SK. Residues 526–564 adopt a coiled-coil conformation; that stretch reads SQLMSTFDSALHLDDELTSDLSRELENGRLVRLVTKLNF. A knob domain region spans residues 565 to 662; that stretch reads VNERPEYEHD…ALLKPTRRLH (98 aa).

Belongs to the protein kinase superfamily. PAN3 family. As to quaternary structure, homodimer. Forms a heterotrimer with a catalytic subunit pan2 to form the poly(A)-nuclease (PAN) deadenylation complex. Interacts (via PAM-2 motif) with poly(A)-binding protein pab1 (via PABC domain), conferring substrate specificity of the enzyme complex.

The protein resides in the cytoplasm. Functionally, regulatory subunit of the poly(A)-nuclease (PAN) deadenylation complex, one of two cytoplasmic mRNA deadenylases involved in mRNA turnover. PAN specifically shortens poly(A) tails of RNA and the activity is stimulated by poly(A)-binding protein pab1. PAN deadenylation is followed by rapid degradation of the shortened mRNA tails by the CCR4-NOT complex. Deadenylated mRNAs are then degraded by two alternative mechanisms, namely exosome-mediated 3'-5' exonucleolytic degradation, or deadenylation-dependent mRNA decaping and subsequent 5'-3' exonucleolytic degradation by xrn1. May also be involved in post-transcriptional maturation of mRNA poly(A) tails. pan3 acts as a positive regulator for PAN activity, recruiting the catalytic subunit pan2 to mRNA via its interaction with RNA and with pab1. The chain is PAN2-PAN3 deadenylation complex subunit PAN3 from Aspergillus oryzae (strain ATCC 42149 / RIB 40) (Yellow koji mold).